We begin with the raw amino-acid sequence, 156 residues long: Ribosomal RNA large subunit methyltransferase H (156 aa).

S-adenosyl-L-methionine is bound by residues leucine 73, glycine 104, and 123–128 (LSPLTL).

The protein belongs to the RNA methyltransferase RlmH family. In terms of assembly, homodimer.

Its subcellular location is the cytoplasm. The catalysed reaction is pseudouridine(1915) in 23S rRNA + S-adenosyl-L-methionine = N(3)-methylpseudouridine(1915) in 23S rRNA + S-adenosyl-L-homocysteine + H(+). Functionally, specifically methylates the pseudouridine at position 1915 (m3Psi1915) in 23S rRNA. The protein is Ribosomal RNA large subunit methyltransferase H of Photorhabdus laumondii subsp. laumondii (strain DSM 15139 / CIP 105565 / TT01) (Photorhabdus luminescens subsp. laumondii).